The primary structure comprises 314 residues: Taste receptor type 2 member 42 (314 aa).

The Extracellular segment spans residues 1 to 7 (MATELDK). A helical membrane pass occupies residues 8 to 28 (IFLILEIAEFIIGMLGNVFIG). Topologically, residues 29-50 (LVNCSEGIKNQKVFSADFILTC) are cytoplasmic. A helical membrane pass occupies residues 51–71 (LAISTIGQLFVILFDSFLVGL). At 72 to 101 (ASHLYTTYRLGKPVIMLWHMTNHLTTWLAT) the chain is on the extracellular side. Residues 102–122 (CLSIFYFFKIAHFPHSLFLWL) traverse the membrane as a helical segment. At 123–127 (RWRMN) the chain is on the cytoplasmic side. The chain crosses the membrane as a helical span at residues 128–148 (GMIVMLLILSLFLLIFDSLVL). The Extracellular segment spans residues 149-187 (EIFIDISLNIIDKSNLTLYLDESKTLYDKLSILKTLLSL). Residue Asn163 is glycosylated (N-linked (GlcNAc...) asparagine). The chain crosses the membrane as a helical span at residues 188 to 208 (TSFIPFSLSLTSLLFFFLSLV). Topologically, residues 209–238 (RHTRNLKLSSLGSRDSSTEAHRRAMKMVMS) are cytoplasmic. Residues 239 to 259 (FLFLFIVHFFSLQVANWIFFM) traverse the membrane as a helical segment. Over 260–265 (LWNNKY) the chain is Extracellular. A helical transmembrane segment spans residues 266–286 (IKFAMLALNAFPSCHSFILIL). The Cytoplasmic portion of the chain corresponds to 287 to 314 (GNSKLRQTAVRLLWHLRNYTKTPNALPL).

The protein belongs to the G-protein coupled receptor T2R family.

The protein localises to the membrane. Functionally, receptor that may play a role in the perception of bitterness and is gustducin-linked. May play a role in sensing the chemical composition of the gastrointestinal content. The activity of this receptor may stimulate alpha gustducin, mediate PLC-beta-2 activation and lead to the gating of TRPM5. This chain is Taste receptor type 2 member 42 (TAS2R42), found in Pan paniscus (Pygmy chimpanzee).